The primary structure comprises 564 residues: 5-aminolevulinate synthase, mitochondrial (564 aa).

The N-terminal 57 residues, 1 to 57 (MESITKVSMSVCPFVRSTSTQALRQLSQTSGALANQARQCPIAGNAIRAKEISIRSY), are a transit peptide targeting the mitochondrion. The substrate site is built by Arg-113, Ser-226, and Lys-245. Pyridoxal 5'-phosphate contacts are provided by Ser-278, His-306, and Thr-350. The active site involves Lys-353. Lys-353 is subject to N6-(pyridoxal phosphate)lysine. Pyridoxal 5'-phosphate contacts are provided by Thr-382 and Thr-383. Thr-468 lines the substrate pocket.

The protein belongs to the class-II pyridoxal-phosphate-dependent aminotransferase family. Homodimer. Pyridoxal 5'-phosphate serves as cofactor.

Its subcellular location is the mitochondrion matrix. The catalysed reaction is succinyl-CoA + glycine + H(+) = 5-aminolevulinate + CO2 + CoA. The protein operates within porphyrin-containing compound metabolism; protoporphyrin-IX biosynthesis; 5-aminolevulinate from glycine: step 1/1. Catalyzes the synthesis of 5-aminolevulinate (ALA) from succinyl-CoA and glycine, the first and rate-limiting step in heme biosynthesis. This Candida albicans (strain SC5314 / ATCC MYA-2876) (Yeast) protein is 5-aminolevulinate synthase, mitochondrial (HEM1).